We begin with the raw amino-acid sequence, 356 residues long: Core protein VP7 (356 aa).

An N-linked (GlcNAc...) asparagine; by host glycan is attached at Asn41.

This sequence belongs to the orbivirus VP7 family.

The protein resides in the virion. In terms of biological role, the VP7 protein is one of the five proteins (with VP1, VP3, VP4, and VP6) which form the inner capsid of the virus. In Broadhaven virus (BRD), this protein is Core protein VP7 (Segment-7).